A 210-amino-acid chain; its full sequence is Outer-membrane lipoprotein carrier protein (210 aa).

An N-terminal signal peptide occupies residues 1-26; it reads MHMIRRAAGALAVFAVAALAAAPAWA.

The protein belongs to the LolA family. In terms of assembly, monomer.

It is found in the periplasm. Its function is as follows. Participates in the translocation of lipoproteins from the inner membrane to the outer membrane. Only forms a complex with a lipoprotein if the residue after the N-terminal Cys is not an aspartate (The Asp acts as a targeting signal to indicate that the lipoprotein should stay in the inner membrane). This is Outer-membrane lipoprotein carrier protein from Bordetella pertussis (strain Tohama I / ATCC BAA-589 / NCTC 13251).